The sequence spans 283 residues: Bifunctional protein FolD (283 aa).

NADP(+) contacts are provided by residues 165-167 (GAS) and Ser-190.

This sequence belongs to the tetrahydrofolate dehydrogenase/cyclohydrolase family. In terms of assembly, homodimer.

It catalyses the reaction (6R)-5,10-methylene-5,6,7,8-tetrahydrofolate + NADP(+) = (6R)-5,10-methenyltetrahydrofolate + NADPH. The catalysed reaction is (6R)-5,10-methenyltetrahydrofolate + H2O = (6R)-10-formyltetrahydrofolate + H(+). The protein operates within one-carbon metabolism; tetrahydrofolate interconversion. In terms of biological role, catalyzes the oxidation of 5,10-methylenetetrahydrofolate to 5,10-methenyltetrahydrofolate and then the hydrolysis of 5,10-methenyltetrahydrofolate to 10-formyltetrahydrofolate. This Cupriavidus taiwanensis (strain DSM 17343 / BCRC 17206 / CCUG 44338 / CIP 107171 / LMG 19424 / R1) (Ralstonia taiwanensis (strain LMG 19424)) protein is Bifunctional protein FolD.